We begin with the raw amino-acid sequence, 252 residues long: Phosphosulfolactate synthase (252 aa).

It belongs to the phosphosulfolactate synthase family.

The catalysed reaction is (2R)-O-phospho-3-sulfolactate = phosphoenolpyruvate + sulfite + H(+). In terms of biological role, catalyzes the addition of sulfite to phosphoenolpyruvate (PEP) to yield (2R)-phospho-3-sulfolactate (PSL). Is probably involved in the biosynthesis of L-sulfolactate, which is a major constituent of sporulating cells and mature spores. The protein is Phosphosulfolactate synthase (yitD) of Bacillus subtilis (strain 168).